We begin with the raw amino-acid sequence, 514 residues long: tRNA-2-methylthio-N(6)-dimethylallyladenosine synthase (514 aa).

The tract at residues 1-21 (MNEEQRKASSVDVLAERDKKA) is disordered. In terms of domain architecture, MTTase N-terminal spans 68-186 (RTFLIKTYGC…LPEILEEAYL (119 aa)). Residues Cys-77, Cys-113, Cys-147, Cys-223, Cys-227, and Cys-230 each contribute to the [4Fe-4S] cluster site. Positions 209-440 (REGNIKAWVN…KKVGHYSQIA (232 aa)) constitute a Radical SAM core domain. The TRAM domain occupies 442–505 (SKYEGQTVTV…QYSLNGSFVK (64 aa)).

The protein belongs to the methylthiotransferase family. MiaB subfamily. As to quaternary structure, monomer. The cofactor is [4Fe-4S] cluster.

The protein resides in the cytoplasm. It catalyses the reaction N(6)-dimethylallyladenosine(37) in tRNA + (sulfur carrier)-SH + AH2 + 2 S-adenosyl-L-methionine = 2-methylsulfanyl-N(6)-dimethylallyladenosine(37) in tRNA + (sulfur carrier)-H + 5'-deoxyadenosine + L-methionine + A + S-adenosyl-L-homocysteine + 2 H(+). In terms of biological role, catalyzes the methylthiolation of N6-(dimethylallyl)adenosine (i(6)A), leading to the formation of 2-methylthio-N6-(dimethylallyl)adenosine (ms(2)i(6)A) at position 37 in tRNAs that read codons beginning with uridine. The chain is tRNA-2-methylthio-N(6)-dimethylallyladenosine synthase from Staphylococcus aureus (strain MRSA252).